We begin with the raw amino-acid sequence, 358 residues long: Aromatic amino acid aminotransferase (358 aa).

K222 bears the N6-(pyridoxal phosphate)lysine mark.

Belongs to the class-II pyridoxal-phosphate-dependent aminotransferase family. Homodimer. Requires pyridoxal 5'-phosphate as cofactor.

The catalysed reaction is an aromatic L-alpha-amino acid + 2-oxoglutarate = an aromatic oxo-acid + L-glutamate. In terms of biological role, aminotransferase that catalyzes the conversion of aromatic amino acids and 2-oxoglutarate into corresponding aromatic oxo acids and L-glutamate. This chain is Aromatic amino acid aminotransferase, found in Mycobacterium sp. (strain KMS).